A 300-amino-acid polypeptide reads, in one-letter code: Iron/alpha-ketoglutarate-dependent dioxygenase okaE (300 aa).

Fe cation contacts are provided by H134, D136, and H210.

Belongs to the PhyH family. In terms of assembly, homodimer. Fe cation is required as a cofactor.

It catalyses the reaction okaramine A + 2-oxoglutarate + AH2 + O2 = 12-deshydroxyl okaramine E + succinate + A + CO2 + H2O. The catalysed reaction is 12-deshydroxyl okaramine E + 2-oxoglutarate + O2 = okaramine E + succinate + CO2. It carries out the reaction okaramine A + 2-oxoglutarate + O2 = okaramine E + succinate + CO2. It functions in the pathway alkaloid biosynthesis. The protein operates within secondary metabolite biosynthesis; terpenoid biosynthesis. Iron/alpha-ketoglutarate-dependent dioxygenase; part of the gene cluster that mediates the biosynthesis of okaramine B, a prenylated indole alkaloid that possesses an unusual octacyclic ring system, including a four-membered azetidine ring and an eight-membered azocine ring, and that exhibits insecticidal activity against silkworm larvae. Within the pathway, okaE forms the unusual 2-dimethyl-3-methyl-azetidine ring to yield 12-deshydroxyl okaramine E from okaramine A. OkaE also catalyzes the hydroxylation of 12-deshydroxyl okaramine E to produce okaramine E. The biosynthesis begins with the NRPS okaA that condenses two tryptophan molecules into cyclo(L-Trp-L-Trp). Prenylation by the prenyltransferase okaC then leads to the formation of cyclo(N8-(alpha,alpha-dimethylallyl)-L-Trp-6a-(alpha,alpha-dime-thylallyl)-L-Trp). This is followed by indole 2,3-epoxidation by the FAD-dependent monooxygenase okaB to facilitate the formation of the hexahydropyrrolo[2,3-b]indole (HPI) moiety of okaramine C. The cytochrome P450 monooxygenase okaD then likely catalyzes formation of the eight-membered ring of okaramine A. The dioxygenase okaE further forms the unusual 2-dimethyl-3-methyl-azetidine ring to yield 12-deshydroxyl okaramine E, as well as the hydroxylation of 12-deshydroxyl okaramine E to produce okaramine E. The cytochrome P450 monoxygenase okaG converts 12-deshydroxyl okaramine E into 3-desmethyl okaramine B which is further methylated by the methyltransferase okaF into okaramine B. In a shunt pathway, okaG and okaF together are also able to convert okaramine E into okaramine D. Okaramine H is produced by nonenzymatic conversion from okaramine A. This chain is Iron/alpha-ketoglutarate-dependent dioxygenase okaE, found in Penicillium ochrochloron.